Here is a 198-residue protein sequence, read N- to C-terminus: Dephospho-CoA kinase (198 aa).

The DPCK domain maps to 4–198 (RIGLTGGIAS…CGLRADGTTW (195 aa)). 12–17 (ASGKSS) contributes to the ATP binding site.

It belongs to the CoaE family.

Its subcellular location is the cytoplasm. The enzyme catalyses 3'-dephospho-CoA + ATP = ADP + CoA + H(+). The protein operates within cofactor biosynthesis; coenzyme A biosynthesis; CoA from (R)-pantothenate: step 5/5. Catalyzes the phosphorylation of the 3'-hydroxyl group of dephosphocoenzyme A to form coenzyme A. The protein is Dephospho-CoA kinase of Parasynechococcus marenigrum (strain WH8102).